We begin with the raw amino-acid sequence, 209 residues long: MAQRFKGSNLFLTALLCLASQGHAVGLGDMLERASQLSDKLHSLSTSLTNDLDTHFPPMGKILMPRPSMCHTASLQTPHDKDQALRVPESELLSLARALLLSWNDPLLLLTSEAPTLSHPQNGVIYSKTRELQDQSNSLSSGLDRLIHKIGSSSKSLSPLPFQGGDLGSDKNSRLINFYFLLSCFRRDSHKIDNFLKLLRCRAAKQDRC.

The signal sequence occupies residues 1-24; sequence MAQRFKGSNLFLTALLCLASQGHA. Intrachain disulfides connect Cys-70–Cys-184 and Cys-201–Cys-209.

Belongs to the somatotropin/prolactin family.

The protein resides in the secreted. The polypeptide is Prolactin (prl) (Anguilla japonica (Japanese eel)).